A 1423-amino-acid polypeptide reads, in one-letter code: MALVTVQRSPTPSTTSSPCASEADSGEEECRSQPRSISESFLTVKGAALFLPRGNGSSTPRVSHRRNKHAGDLQQHLQAMFILLRPEDNIRLAVRLESTYQNRTRYMVVVSTNGRQDTEESIVLGMDFSSNDSSTCTMGLVLPLWSDTLIHLDGDGGFSVSTDNRVHIFKPVSVQAMWSALQSLHKACEVARMHNYYPGSLFLTWVSYYESHINSDQSSVNEWNAMQDVQSHRPDSPALFTDIPTERERTERLIKTKLREIMMQKDLENITSKEIRTELEMQMVCNLREFKEFIDNEMIVILGQMDSPTQIFEHVFLGSEWNASNLEDLQNRGVRYILNVTREIDNFFPGVFEYHNIRVYDEEATDLLAYWNDTYKFISKAKKHGSKCLVHCKMGVSRSASTVIAYAMKEYGWNLDRAYDYVKERRTVTKPNPSFMRQLEEYQGILLASKQRHNKLWRSHSDSDLSDHHEPICKPGLELNKKEMTTSADQIAEVKTVENLAAMPTVFMEHVVPQDANQKGLHTKERVICLEFSSQEFRAGQIEDELNLNDINGCSSGCCLSESKLPLDNCHASKALLQPGQAPDIANKFPDLAVEDLETDALKADMNVHLLPMEELTSRLKDLPMSPDLESPSPQASCQAAISDFSTDRIDFFSALEKFVELSQETRSRSFSHSRIEELGGGRSEGCRLSVIEVAASEMAADDQRSSSLSNTPHASEESSVDEDQSKAITELVSPDIIMQSHSENAISVKEIVTEIESISQGVGQVQLKGDILSNPCHTPKKSTIHELPLERVPAPESKPGHWEQDESFCSVQPELARDSGKCAPEEGCLTTHSSTADLEEEEPVEGEHDWGPGMHSGAKWCPGSVRRATLEFEERLRQEQENHGTASAGPTLSNRKNSKNDSSVADLMPKWKSDETTPEHSFFLKEAEPSKGKGKCSGSEAGSLSHCERNPTMPDCELLEHHSLPAPQDCLGSDSRSKKQEGDLKKQRAVVPNQECDTQAILLPLPKKIEIIEYTPTVTSLGHTEPGGEATPSKEGEKQGLRKVKMEQSITMFCALDENLNRTLEPSQVSLHPQVLPLPHSSSECDRPADPNPMLSSPQDKGDCPSTPFKTAAPFVSCSTQGASFSLDYLLPHSVVHLEGCTEQSSATDNELSPEQASWEDSRGHFLSSGSGMAHTSSPLTNEDLSLINKLGDSVGVLQKKLDPSPEACRIPHSSSSENIRDLSHSRGVVKEHAKEIESRVIFQAGFSKTSQMKRSASLAKLGYLDLCKDYLPDRELVSSESPHLKLLQPFLRTDSGMHALMAHEPSESAGAQQNPQPTKYSVEQLKTSECIVQSKPVERPSVQYAKEFGYSQQCLLPKARPELTSSEGGLPLLQTQGLQYTGPSPGLAVAPRQQHGRTHPLRRLKRANDKKRTTNPFYNTM.

Disordered stretches follow at residues 1–37 and 51–70; these read MALVTVQRSPTPSTTSSPCASEADSGEEECRSQPRSI and LPRGNGSSTPRVSHRRNKHA. The span at 9–18 shows a compositional bias: low complexity; the sequence is SPTPSTTSSP. Phosphoserine occurs at positions 17, 25, and 36. The DEK-C domain occupies 248–303; it reads ERTERLIKTKLREIMMQKDLENITSKEIRTELEMQMVCNLREFKEFIDNEMIVILG. The 142-residue stretch at 307 to 448 folds into the Tyrosine-protein phosphatase domain; it reads SPTQIFEHVF…LEEYQGILLA (142 aa). C392 acts as the Phosphocysteine intermediate in catalysis. 5 positions are modified to phosphoserine: S461, S487, S534, S631, and S633. Disordered stretches follow at residues 698 to 725, 833 to 858, 878 to 950, 967 to 991, 1021 to 1042, 1074 to 1105, and 1207 to 1226; these read EMAADDQRSSSLSNTPHASEESSVDEDQ, HSSTADLEEEEPVEGEHDWGPGMHSG, RQEQ…HCER, APQDCLGSDSRSKKQEGDLKKQRAV, SLGHTEPGGEATPSKEGEKQGL, PQVLPLPHSSSECDRPADPNPMLSSPQDKGDC, and PEACRIPHSSSSENIRDLSH. A compositionally biased stretch (polar residues) spans 884 to 904; that stretch reads HGTASAGPTLSNRKNSKNDSS. 3 stretches are compositionally biased toward basic and acidic residues: residues 910–932, 976–987, and 1033–1042; these read PKWKSDETTPEHSFFLKEAEPSK, SRSKKQEGDLKK, and PSKEGEKQGL. S1217 bears the Phosphoserine mark. T1422 is subject to Phosphothreonine.

This sequence belongs to the protein-tyrosine phosphatase family. Interacts with filamentous actin. Expressed in brain, heart, liver, skeletal muscle, testis and thymus. Also expressed at lower levels in kidney, small intestine and spleen. Within testicular seminiferous tubules expressed in germ cells and spermatocytes, where it has a cytoplasmic localization, and round spermatids, where it concentrates in the acrosomal region next to the nucleus.

The protein localises to the cytoplasm. The protein resides in the cytoskeleton. It is found in the cell junction. Its subcellular location is the focal adhesion. It localises to the cytoplasmic vesicle. The protein localises to the secretory vesicle. The protein resides in the acrosome. It catalyses the reaction O-phospho-L-tyrosyl-[protein] + H2O = L-tyrosyl-[protein] + phosphate. The catalysed reaction is O-phospho-L-seryl-[protein] + H2O = L-seryl-[protein] + phosphate. The enzyme catalyses O-phospho-L-threonyl-[protein] + H2O = L-threonyl-[protein] + phosphate. Its function is as follows. Protein phosphatase which regulates actin filament dynamics. Dephosphorylates and activates the actin binding/depolymerizing factor cofilin, which subsequently binds to actin filaments and stimulates their disassembly. Inhibitory phosphorylation of cofilin is mediated by LIMK1, which may also be dephosphorylated and inactivated by this protein. Required for spermatogenesis. Involved in acrosome biogenesis, probably by regulating cofilin-mediated actin cytoskeleton remodeling during proacrosomal vesicle fusion and/or Golgi to perinuclear vesicle trafficking. The polypeptide is Protein phosphatase Slingshot homolog 2 (Ssh2) (Mus musculus (Mouse)).